A 273-amino-acid polypeptide reads, in one-letter code: Sanguinarine reductase (273 aa).

Ser-153 acts as the Proton donor in catalysis. Substrate-binding positions include 157-161 (CDPDH) and Lys-175.

Belongs to the NAD(P)-dependent epimerase/dehydratase family. In terms of assembly, monomer.

The catalysed reaction is dihydrosanguinarine + NADP(+) = sanguinarine + NADPH. The enzyme catalyses dihydrosanguinarine + NAD(+) = sanguinarine + NADH. It catalyses the reaction dihydrochelirubine + NAD(+) = chelirubine + NADH. It carries out the reaction dihydrochelirubine + NADP(+) = chelirubine + NADPH. With respect to regulation, inhibited by iodoacetamide and irreversibly by its product, dihydrosanguinarine. Catalyzes the reduction of benzophenanthridines, preferentially sanguinarine, to the corresponding dihydroalkaloids. Involved in detoxifying the phytoalexins produced by plant itself. The sanguinarine produced by intact cells upon elicitation, after excretion and binding to cell wall elements, is rapidly reabsorbed and reduced to the less toxic dihydrosanguinarine. Can work with both NAD(P) or NAD as a hydrogen donor, but at low concentrations, the reaction velocity with NAD(P)H is threefold higher than with NADH. However, chelerythrine shows maximum conversion rates with NADH. The substrate preference is sanguinarine &gt; chelerythrine &gt; chelirubine, macarpine or 10-OH-chelerythrine. No activity with berberine or phenanthridine cations. The chain is Sanguinarine reductase from Eschscholzia californica (California poppy).